The chain runs to 61 residues: MKTVCGVFMVLLALTVLLAYLPGNTVEAGSCSNKNCVSSCQGSGNSSGKCINSKCKCYPRG.

Positions 1 to 19 (MKTVCGVFMVLLALTVLLA) are cleaved as a signal peptide. 3 disulfides stabilise this stretch: C31–C50, C36–C55, and C40–C57.

The protein belongs to the short scorpion toxin superfamily. In terms of tissue distribution, expressed by the venom gland.

The protein resides in the secreted. The polypeptide is Putative neurotoxin-A (Lychas mucronatus (Chinese swimming scorpion)).